Consider the following 285-residue polypeptide: Probable endonuclease 4 (285 aa).

The Zn(2+) site is built by His67, His107, Glu144, Asp177, His180, His214, Asp227, His229, and Glu259.

Belongs to the AP endonuclease 2 family. It depends on Zn(2+) as a cofactor.

The enzyme catalyses Endonucleolytic cleavage to 5'-phosphooligonucleotide end-products.. In terms of biological role, endonuclease IV plays a role in DNA repair. It cleaves phosphodiester bonds at apurinic or apyrimidinic (AP) sites, generating a 3'-hydroxyl group and a 5'-terminal sugar phosphate. The sequence is that of Probable endonuclease 4 from Persephonella marina (strain DSM 14350 / EX-H1).